The primary structure comprises 536 residues: Glycine-rich extracellular protein 1 (536 aa).

The first 22 residues, Met-1–Gly-22, serve as a signal peptide directing secretion. Disordered stretches follow at residues Ala-111–Asn-134, Gly-306–Trp-336, and Gly-500–Cys-536. The span at Phe-115–Lys-124 shows a compositional bias: gly residues. Over residues Gly-521–Cys-536 the composition is skewed to gly residues.

The polypeptide is Glycine-rich extracellular protein 1 (Homo sapiens (Human)).